Reading from the N-terminus, the 172-residue chain is Adenine phosphoribosyltransferase (172 aa).

This sequence belongs to the purine/pyrimidine phosphoribosyltransferase family. Homodimer.

It localises to the cytoplasm. The catalysed reaction is AMP + diphosphate = 5-phospho-alpha-D-ribose 1-diphosphate + adenine. It participates in purine metabolism; AMP biosynthesis via salvage pathway; AMP from adenine: step 1/1. Functionally, catalyzes a salvage reaction resulting in the formation of AMP, that is energically less costly than de novo synthesis. The sequence is that of Adenine phosphoribosyltransferase from Latilactobacillus sakei subsp. sakei (strain 23K) (Lactobacillus sakei subsp. sakei).